Reading from the N-terminus, the 699-residue chain is Elongation factor G (699 aa).

Residues Asn-10–Thr-292 enclose the tr-type G domain. GTP-binding positions include Ala-19–Thr-26, Asp-90–His-94, and Asn-144–Asp-147. The tract at residues Thr-292 to Ser-312 is disordered.

Belongs to the TRAFAC class translation factor GTPase superfamily. Classic translation factor GTPase family. EF-G/EF-2 subfamily.

It localises to the cytoplasm. Catalyzes the GTP-dependent ribosomal translocation step during translation elongation. During this step, the ribosome changes from the pre-translocational (PRE) to the post-translocational (POST) state as the newly formed A-site-bound peptidyl-tRNA and P-site-bound deacylated tRNA move to the P and E sites, respectively. Catalyzes the coordinated movement of the two tRNA molecules, the mRNA and conformational changes in the ribosome. This Coxiella burnetii (strain RSA 331 / Henzerling II) protein is Elongation factor G.